A 117-amino-acid polypeptide reads, in one-letter code: UPF0342 protein LEUM_1212 (117 aa).

It belongs to the UPF0342 family.

This chain is UPF0342 protein LEUM_1212, found in Leuconostoc mesenteroides subsp. mesenteroides (strain ATCC 8293 / DSM 20343 / BCRC 11652 / CCM 1803 / JCM 6124 / NCDO 523 / NBRC 100496 / NCIMB 8023 / NCTC 12954 / NRRL B-1118 / 37Y).